The chain runs to 117 residues: UPF0122 protein Teth514_1714 (117 aa).

Belongs to the UPF0122 family.

Functionally, might take part in the signal recognition particle (SRP) pathway. This is inferred from the conservation of its genetic proximity to ftsY/ffh. May be a regulatory protein. The polypeptide is UPF0122 protein Teth514_1714 (Thermoanaerobacter sp. (strain X514)).